The chain runs to 57 residues: Large ribosomal subunit protein bL32 (57 aa).

The segment at 1–38 is disordered; the sequence is MAVQQNKPTRSKRGMRRSHDALTAVTSLSVDKTSGEKH.

The protein belongs to the bacterial ribosomal protein bL32 family.

This chain is Large ribosomal subunit protein bL32, found in Escherichia coli O7:K1 (strain IAI39 / ExPEC).